Here is a 342-residue protein sequence, read N- to C-terminus: Paired box protein Pax-9 (342 aa).

A DNA-binding region (paired) is located at residues 4-130 (AFGEVNQLGG…SSISRILRNK (127 aa)). The PAI subdomain stretch occupies residues 7–63 (EVNQLGGVFVNGRPLPNAIRLRIVELAQLGIRPCDISRQLRVSHGCVSKILARYNET). Positions 82–130 (TVVKHIRTYKQRDPGIFAWEIRDRLLADGVCDKYNVPSVSSISRILRNK) are RED subdomain. Positions 168–189 (AAAAKVPTPPGVPAIPGSVALP) are interaction with KDM5B.

In terms of assembly, interacts with KDM5B. As to expression, in the embryo, expressed in pharyngeal pouches and derivatives, developing vertebral column, tail, head and limbs.

It is found in the nucleus. Its function is as follows. Transcription factor required for normal development of thymus, parathyroid glands, ultimobranchial bodies, teeth, skeletal elements of skull and larynx as well as distal limbs. The polypeptide is Paired box protein Pax-9 (Pax9) (Mus musculus (Mouse)).